We begin with the raw amino-acid sequence, 761 residues long: RNA-binding protein mde7 (761 aa).

Polar residues-rich tracts occupy residues 31–46, 58–83, and 99–110; these read PNHS…NSLL, SRNS…TTPF, and SRNNSYLQGTAE. Disordered stretches follow at residues 31–110 and 188–213; these read PNHS…GTAE and HYFD…EASN. A compositionally biased stretch (basic and acidic residues) spans 188–197; sequence HYFDDTDKSV. A compositionally biased stretch (low complexity) spans 199–211; it reads SKSSSGSNSLSEA. The RRM 1 domain maps to 223–289; the sequence is IVGGLPDDFD…SSTNNFTIIQ (67 aa). Positions 442–466 are enriched in polar residues; sequence ESNSLSNQPNNFAQTSFDYQPNHPN. Positions 442–468 are disordered; it reads ESNSLSNQPNNFAQTSFDYQPNHPNAI. An RRM 2 domain is found at 602–679; it reads NTIYVGNLSN…GGIRLSYSKN (78 aa).

The chain is RNA-binding protein mde7 (mde7) from Schizosaccharomyces pombe (strain 972 / ATCC 24843) (Fission yeast).